Consider the following 256-residue polypeptide: Triosephosphate isomerase (256 aa).

Position 9-11 (9-11 (NWK)) interacts with substrate. The active-site Electrophile is H95. The Proton acceptor role is filled by E167. Substrate contacts are provided by residues G173, S213, and 234 to 235 (GG).

Belongs to the triosephosphate isomerase family. Homodimer.

It is found in the cytoplasm. It catalyses the reaction D-glyceraldehyde 3-phosphate = dihydroxyacetone phosphate. It functions in the pathway carbohydrate biosynthesis; gluconeogenesis. The protein operates within carbohydrate degradation; glycolysis; D-glyceraldehyde 3-phosphate from glycerone phosphate: step 1/1. Functionally, involved in the gluconeogenesis. Catalyzes stereospecifically the conversion of dihydroxyacetone phosphate (DHAP) to D-glyceraldehyde-3-phosphate (G3P). The sequence is that of Triosephosphate isomerase from Symbiobacterium thermophilum (strain DSM 24528 / JCM 14929 / IAM 14863 / T).